The chain runs to 252 residues: MTQSASTAPSWSIDPADVARFSAIAAEWWDPRGKFAPLHVFNPCRLSFIREQALARFERDGNGRTPFEGLRLLDIGCGGGLLSEPMARLGFTVTAVDASEKNIKTAATHAAEQGLEIGYRPATAEQLLAEGAGPFDVVLTMEVVEHVADPGEFLRTCAKLLAPGGLMIVATLNRTLKALALAKIGAEYVLRWVPPGTHDWKQFLKPDELRAFLAGEPVDVHGPFGVAYNPLTGRWSRSADCDINYMMTVTKD.

The S-adenosyl-L-methionine site is built by Arg-45, Gly-76, Asp-97, and Met-141.

This sequence belongs to the methyltransferase superfamily. UbiG/COQ3 family.

The catalysed reaction is a 3-demethylubiquinol + S-adenosyl-L-methionine = a ubiquinol + S-adenosyl-L-homocysteine + H(+). It catalyses the reaction a 3-(all-trans-polyprenyl)benzene-1,2-diol + S-adenosyl-L-methionine = a 2-methoxy-6-(all-trans-polyprenyl)phenol + S-adenosyl-L-homocysteine + H(+). Its pathway is cofactor biosynthesis; ubiquinone biosynthesis. O-methyltransferase that catalyzes the 2 O-methylation steps in the ubiquinone biosynthetic pathway. In Caulobacter sp. (strain K31), this protein is Ubiquinone biosynthesis O-methyltransferase.